Reading from the N-terminus, the 199-residue chain is Thioredoxin reductase-like selenoprotein T (199 aa).

Positions 1–24 (MRAAGLGLGIGLLLLAALAGPGGS) are cleaved as a signal peptide. Positions 50–53 (CVSU) form a cross-link, cysteinyl-selenocysteine (Cys-Sec). Sec-53 is a non-standard amino acid (selenocysteine). The chain crosses the membrane as a helical span at residues 95 to 115 (VFKLVLIGLIIVGKDPFAFFG).

This sequence belongs to the SelWTH family. Selenoprotein T subfamily. Post-translationally, may contain a selenide-sulfide bond between Cys-50 and Sec-53. This bond is speculated to serve as redox-active pair.

The protein localises to the endoplasmic reticulum membrane. The catalysed reaction is [thioredoxin]-dithiol + NADP(+) = [thioredoxin]-disulfide + NADPH + H(+). In terms of biological role, selenoprotein with thioredoxin reductase-like oxidoreductase activity. The sequence is that of Thioredoxin reductase-like selenoprotein T from Gallus gallus (Chicken).